A 293-amino-acid polypeptide reads, in one-letter code: Acidic endochitinase SE2 (293 aa).

Positions 1-25 (MAAKIVSVLFLISLLIFASFESSHG) are cleaved as a signal peptide. Residues 26–293 (SQIVIYWGQN…GYSSAIKSSV (268 aa)) form the GH18 domain. 2 cysteine pairs are disulfide-bonded: Cys-45–Cys-91 and Cys-75–Cys-81. Glu-151 acts as the Proton donor in catalysis. A disulfide bridge links Cys-183 with Cys-212.

This sequence belongs to the glycosyl hydrolase 18 family. Chitinase class II subfamily. In terms of tissue distribution, accumulates in leaves during infection.

Its subcellular location is the secreted. It localises to the extracellular space. It catalyses the reaction Random endo-hydrolysis of N-acetyl-beta-D-glucosaminide (1-&gt;4)-beta-linkages in chitin and chitodextrins.. Functionally, this protein functions as a defense against chitin containing fungal pathogens. This endochitinase also exhibits exochitinase activity, i.e. it is capable of hydrolyzing chito-oligosaccharides, including chitobiose. This chain is Acidic endochitinase SE2 (SE2), found in Beta vulgaris (Sugar beet).